The following is a 710-amino-acid chain: Polyribonucleotide nucleotidyltransferase (710 aa).

2 residues coordinate Mg(2+): D488 and D494. The KH domain occupies 555-615 (PVIKVISIDP…EKVDAAIEQI (61 aa)). An S1 motif domain is found at 625 to 688 (GDVFSGKVTR…NLGRLQLEEF (64 aa)). The interval 688-710 (FSDSPDHKHGEKRSFKRHRKNDN) is disordered. Residues 691-700 (SPDHKHGEKR) show a composition bias toward basic and acidic residues. Residues 701–710 (SFKRHRKNDN) show a composition bias toward basic residues.

Belongs to the polyribonucleotide nucleotidyltransferase family. Mg(2+) is required as a cofactor.

It is found in the cytoplasm. It catalyses the reaction RNA(n+1) + phosphate = RNA(n) + a ribonucleoside 5'-diphosphate. Involved in mRNA degradation. Catalyzes the phosphorolysis of single-stranded polyribonucleotides processively in the 3'- to 5'-direction. The polypeptide is Polyribonucleotide nucleotidyltransferase (Pseudothermotoga lettingae (strain ATCC BAA-301 / DSM 14385 / NBRC 107922 / TMO) (Thermotoga lettingae)).